The sequence spans 1178 residues: F-box/WD repeat-containing protein A-like protein (1178 aa).

In terms of domain architecture, START spans 1-208 (MQYVNGMDIV…TLPNLIKYIK (208 aa)). Disordered stretches follow at residues 223–296 (KTPD…NLNE), 569–594 (SLII…DNGI), and 618–649 (SSSS…STFS). 2 stretches are compositionally biased toward low complexity: residues 229–293 (NPNL…SNEN) and 571–580 (IINSPPNSNN). The F-box domain occupies 717–763 (CSLFDLLPYEMIQYIFTLMDATHLIRMSRTCKYFNRICLDDNIWRDL). The tract at residues 804–841 (KKSNNSSPLSASSSSSSPSPPLLPPPPPPIPQLPDMLL) is disordered. The segment covering 809–820 (SSPLSASSSSSS) has biased composition (low complexity). Residues 821–835 (PSPPLLPPPPPPIPQ) show a composition bias toward pro residues. WD repeat units lie at residues 886-923 (GHKG…CEST), 925-979 (RCGA…IEKE), 981-1017 (RFLY…ELQM), 1020-1059 (IENT…TELV), 1062-1100 (GHKG…SAIH), 1104-1141 (SHSS…EPNL), and 1146-1178 (NNLS…FNSK).

Functionally, substrate recognition component of a SCF (SKP1-CUL1-F-box protein) E3 ubiquitin-protein ligase complex which mediates the ubiquitination and subsequent proteasomal degradation of target proteins. This is F-box/WD repeat-containing protein A-like protein from Dictyostelium discoideum (Social amoeba).